A 175-amino-acid polypeptide reads, in one-letter code: Adenine phosphoribosyltransferase (175 aa).

The protein belongs to the purine/pyrimidine phosphoribosyltransferase family. In terms of assembly, homodimer.

The protein localises to the cytoplasm. The catalysed reaction is AMP + diphosphate = 5-phospho-alpha-D-ribose 1-diphosphate + adenine. The protein operates within purine metabolism; AMP biosynthesis via salvage pathway; AMP from adenine: step 1/1. Functionally, catalyzes a salvage reaction resulting in the formation of AMP, that is energically less costly than de novo synthesis. In Francisella tularensis subsp. holarctica (strain FTNF002-00 / FTA), this protein is Adenine phosphoribosyltransferase.